The chain runs to 507 residues: GMP synthase [glutamine-hydrolyzing] (507 aa).

The Glutamine amidotransferase type-1 domain occupies 9–202; sequence TILIIDFGSQ…VHRIVGVKPG (194 aa). Catalysis depends on Cys-86, which acts as the Nucleophile. Residues His-176 and Glu-178 contribute to the active site. Residues 203 to 395 enclose the GMPS ATP-PPase domain; the sequence is WTMGAYREQA…LGLPDSFIGR (193 aa). An ATP-binding site is contributed by 230-236; that stretch reads SGGVDSS.

In terms of assembly, homodimer.

The enzyme catalyses XMP + L-glutamine + ATP + H2O = GMP + L-glutamate + AMP + diphosphate + 2 H(+). The protein operates within purine metabolism; GMP biosynthesis; GMP from XMP (L-Gln route): step 1/1. Its function is as follows. Catalyzes the synthesis of GMP from XMP. This chain is GMP synthase [glutamine-hydrolyzing], found in Brucella melitensis biotype 1 (strain ATCC 23456 / CCUG 17765 / NCTC 10094 / 16M).